A 367-amino-acid chain; its full sequence is GMP synthase [glutamine-hydrolyzing] subunit B (367 aa).

Residues 2–190 (FDPASFVKEI…LKLPKEISER (189 aa)) form the GMPS ATP-PPase domain. Residue 29–35 (SGGVDST) coordinates ATP.

As to quaternary structure, heterodimer composed of a glutamine amidotransferase subunit (A) and a GMP-binding subunit (B).

The catalysed reaction is XMP + L-glutamine + ATP + H2O = GMP + L-glutamate + AMP + diphosphate + 2 H(+). Its pathway is purine metabolism; GMP biosynthesis; GMP from XMP (L-Gln route): step 1/1. Functionally, catalyzes the synthesis of GMP from XMP. The chain is GMP synthase [glutamine-hydrolyzing] subunit B from Saccharolobus islandicus (strain M.16.27) (Sulfolobus islandicus).